A 182-amino-acid chain; its full sequence is Small ribosomal subunit protein uS4c (182 aa).

Positions 82 to 143 constitute an S4 RNA-binding domain; the sequence is MRLDNILFRL…KERSKVLIQN (62 aa).

It belongs to the universal ribosomal protein uS4 family. As to quaternary structure, part of the 30S ribosomal subunit. Contacts protein S5. The interaction surface between S4 and S5 is involved in control of translational fidelity.

The protein resides in the plastid. The protein localises to the chloroplast. Functionally, one of the primary rRNA binding proteins, it binds directly to 16S rRNA where it nucleates assembly of the body of the 30S subunit. Its function is as follows. With S5 and S12 plays an important role in translational accuracy. The sequence is that of Small ribosomal subunit protein uS4c (rps4) from Tigridia sp. (strain Lejeune 1997).